Consider the following 151-residue polypeptide: UPF0178 protein Spea_2958 (151 aa).

It belongs to the UPF0178 family.

This Shewanella pealeana (strain ATCC 700345 / ANG-SQ1) protein is UPF0178 protein Spea_2958.